A 202-amino-acid chain; its full sequence is LexA repressor (202 aa).

Positions 32–52 form a DNA-binding region, H-T-H motif; it reads RAEVCSAFGFKSPNAAETHLR. Residues serine 121 and lysine 158 each act as for autocatalytic cleavage activity in the active site.

The protein belongs to the peptidase S24 family. As to quaternary structure, homodimer.

It carries out the reaction Hydrolysis of Ala-|-Gly bond in repressor LexA.. Functionally, represses a number of genes involved in the response to DNA damage (SOS response), including recA and lexA. In the presence of single-stranded DNA, RecA interacts with LexA causing an autocatalytic cleavage which disrupts the DNA-binding part of LexA, leading to derepression of the SOS regulon and eventually DNA repair. The chain is LexA repressor from Azoarcus sp. (strain BH72).